The primary structure comprises 780 residues: Cullin-5 (780 aa).

Ser-34 carries the phosphoserine modification. At Thr-210 the chain carries Phosphothreonine. One can recognise a Cullin neddylation domain in the interval 711–772 (RILRTQEAII…HKYIRRDESD (62 aa)). Residue Lys-724 forms a Glycyl lysine isopeptide (Lys-Gly) (interchain with G-Cter in NEDD8) linkage.

Belongs to the cullin family. In terms of assembly, component of multiple cullin-5-RING E3 ubiquitin-protein ligase complexes (ECS complexes, also named CRL5 complexes) formed of CUL5, Elongin BC (ELOB and ELOC), RNF7/RBX2 and a variable SOCS box domain-containing protein as substrate-specific recognition component. CUL5-containing ECS complexes specifically contain RNF7/RBX2, and not RBX1, as catalytic subunit. Component of the ECS(ASB2) complex with the substrate recognition component ASB2. Component of the ECS(ASB6) complex with the substrate recognition component ASB6. Component of the ECS(ASB7) complex with the substrate recognition component ASB7. Component of the ECS(ASB9) complex with the substrate recognition component ASB9. Component of the ECS(ASB11) complex with the substrate recognition component ASB11. Component of the ECS(ASB12) complex with the substrate recognition component ASB12. Component of the ECS(LRRC41) complex with the substrate recognition component LRRC41. Component of the ECS(SOCS1) complex with the substrate recognition component SOCS1. Component of the ECS(SOCS2) complex with the substrate recognition component SOCS2. Component of the ECS(WSB1) complex with the substrate recognition subunit WSB1. Component of the ECS(SOCS3) complex with the substrate recognition component SOCS3. Component of the ECS(SOCS7) complex with the substrate recognition component SOCS7. Component of the ECS(SPSB1) complex with the substrate recognition component SPSB1. Component of the ECS(SPSB3) complex with the substrate recognition component SPSB3. Component of the ECS(SPSB2) complex with the substrate recognition component SPSB2. Component of the ECS(SPSB4) complex with the substrate recognition component SPSB4. Component of the ECS(RAB40) complex with the substrate recognition subunit RAB40A, RAB40B or RAB40C. Component of the ECS(KLHDC1) complex with the substrate recognition component KLHDC1. Component of the ECS(PCMTD1) complex with the substrate recognition subunit PCMTD1. May also form complexes containing RBX1 and ELOA or VHL; additional evidence is however required to confirm this result in vivo. Interacts (when neddylated) with ARIH2; leading to activate the E3 ligase activity of ARIH2. Interacts with ERCC6; the interaction is induced by DNA damaging agents or inhibitors of RNA polymerase II elongation. Interacts with ELOA (via the BC-box). Interacts (unneddylated form) with DCUN1D1, DCUN1D2, DCUN1D3, DCUN1D4 and DCUN1D5; these interactions promote the cullin neddylation. As to quaternary structure, (Microbial infection) Interacts (via the substrate recognition component) with HIV-1 Vif; forming an active cullin-5-RING E3 ubiquitin-protein ligase complex (ECS complex). (Microbial infection) Interacts (via the substrate recognition component) with human adenovirus 5 proteins E1B-55K and E4-orf6. In terms of assembly, (Microbial infection) Interacts with herpes virus 8 protein LANA1; this interaction promotes the degradation of NF-kappa-B component RELA. As to quaternary structure, (Microbial infection) Interacts with molluscum contagiosum virus protein MC132; this interaction promotes the degradation of NF-kappa-B component RELA. In terms of processing, neddylated; which enhances the ubiquitination activity of ECS complexes and prevents binding of the inhibitor CAND1. Deneddylated via its interaction with the COP9 signalosome (CSN).

It localises to the nucleus. It participates in protein modification; protein ubiquitination. Functionally, core component of multiple cullin-5-RING E3 ubiquitin-protein ligase complexes (ECS complexes, also named CRL5 complexes), which mediate the ubiquitination and subsequent proteasomal degradation of target proteins. Acts a scaffold protein that contributes to catalysis through positioning of the substrate and the ubiquitin-conjugating enzyme. The functional specificity of the E3 ubiquitin-protein ligase complex depends on the variable SOCS box-containing substrate recognition component. Acts as a key regulator of neuron positioning during cortex development: component of various SOCS-containing ECS complexes, such as the ECS(SOCS7) complex, that regulate reelin signaling by mediating ubiquitination and degradation of DAB1. ECS(SOCS1) seems to direct ubiquitination of JAK2. The ECS(SOCS2) complex mediates the ubiquitination and subsequent proteasomal degradation of phosphorylated EPOR and GHR. The ECS(SPSB3) complex catalyzes ubiquitination of nuclear CGAS. ECS(KLHDC1) complex is part of the DesCEND (destruction via C-end degrons) pathway and mediates ubiquitination and degradation of truncated SELENOS selenoprotein produced by failed UGA/Sec decoding, which ends with a glycine. The ECS(ASB9) complex mediates ubiquitination and degradation of CKB. As part of some ECS complex, promotes 'Lys-11'-linked ubiquitination and degradation of BTRC. As part of a multisubunit ECS complex, polyubiquitinates monoubiquitinated POLR2A. As part of the ECS(RAB40C) complex, mediates ANKRD28 ubiquitination and degradation, thereby inhibiting protein phosphatase 6 (PP6) complex activity and focal adhesion assembly during cell migration. As part of the ECS(RAB40A) complex, mediates RHOU 'Lys-48'-linked ubiquitination and degradation, thus inhibiting focal adhesion disassembly during cell migration. As part of the ECS(RAB40B) complex, mediates LIMA1/EPLIN and RAP2 ubiquitination, thereby regulating actin cytoskeleton dynamics and stress fiber formation during cell migration. May form a cell surface vasopressin receptor. Its function is as follows. (Microbial infection) Following infection by HIV-1 virus, CUL5 associates with HIV-1 Vif proteins and forms a cullin-5-RING E3 ubiquitin-protein ligase complex (ECS complex) that catalyzes ubiquitination and degradation of APOBEC3F and APOBEC3G. The complex can also ubiquitinate APOBEC3H to some extent. In terms of biological role, (Microbial infection) Seems to be involved in proteasomal degradation of p53/TP53 stimulated by adenovirus E1B-55 kDa protein. This Homo sapiens (Human) protein is Cullin-5.